The following is a 116-amino-acid chain: Large ribosomal subunit protein bL19 (116 aa).

The protein belongs to the bacterial ribosomal protein bL19 family.

In terms of biological role, this protein is located at the 30S-50S ribosomal subunit interface and may play a role in the structure and function of the aminoacyl-tRNA binding site. The sequence is that of Large ribosomal subunit protein bL19 from Syntrophomonas wolfei subsp. wolfei (strain DSM 2245B / Goettingen).